Here is a 477-residue protein sequence, read N- to C-terminus: Probable cytosolic Fe-S cluster assembly factor GK14772 (477 aa).

Residues Cys-23, Cys-69, Cys-72, Cys-75, Cys-188, Cys-244, Cys-396, and Cys-400 each contribute to the [4Fe-4S] cluster site.

This sequence belongs to the NARF family.

Functionally, component of the cytosolic iron-sulfur (Fe/S) protein assembly machinery. Required for maturation of extramitochondrial Fe/S proteins. The polypeptide is Probable cytosolic Fe-S cluster assembly factor GK14772 (Drosophila willistoni (Fruit fly)).